Here is a 187-residue protein sequence, read N- to C-terminus: Elongation factor P (187 aa).

This sequence belongs to the elongation factor P family.

It localises to the cytoplasm. Its pathway is protein biosynthesis; polypeptide chain elongation. In terms of biological role, involved in peptide bond synthesis. Stimulates efficient translation and peptide-bond synthesis on native or reconstituted 70S ribosomes in vitro. Probably functions indirectly by altering the affinity of the ribosome for aminoacyl-tRNA, thus increasing their reactivity as acceptors for peptidyl transferase. This Ruegeria pomeroyi (strain ATCC 700808 / DSM 15171 / DSS-3) (Silicibacter pomeroyi) protein is Elongation factor P.